A 242-amino-acid chain; its full sequence is Putative prolyl 4-hydroxylase (242 aa).

Positions 128–238 (NAEDLQVVRY…KWIANLWFRE (111 aa)) constitute a Fe2OG dioxygenase domain.

Belongs to the P4HA family. Fe cation is required as a cofactor. L-ascorbate serves as cofactor.

It is found in the virion. The enzyme catalyses L-prolyl-[collagen] + 2-oxoglutarate + O2 = trans-4-hydroxy-L-prolyl-[collagen] + succinate + CO2. Functionally, may catalyze the post-translational formation of 4-hydroxyproline in -Xaa-Pro-Gly- sequences in the 6 collagen-like proteins of Mimivirus. The sequence is that of Putative prolyl 4-hydroxylase from Acanthamoeba polyphaga mimivirus (APMV).